We begin with the raw amino-acid sequence, 195 residues long: Ribosomal RNA small subunit methyltransferase G (195 aa).

Residues G60, L65, 114–115 (IE), and R128 each bind S-adenosyl-L-methionine.

The protein belongs to the methyltransferase superfamily. RNA methyltransferase RsmG family.

Its subcellular location is the cytoplasm. The enzyme catalyses guanosine(527) in 16S rRNA + S-adenosyl-L-methionine = N(7)-methylguanosine(527) in 16S rRNA + S-adenosyl-L-homocysteine. In terms of biological role, specifically methylates the N7 position of guanine in position 527 of 16S rRNA. The protein is Ribosomal RNA small subunit methyltransferase G of Dinoroseobacter shibae (strain DSM 16493 / NCIMB 14021 / DFL 12).